Reading from the N-terminus, the 414-residue chain is MTRHDAQLYELKKKIEELKKIRGRGTELISLYIPAGYDLSKVMQQLREEYSTAQNIKSKTTRKNVLGALERAMQHLKLYKQTPENGLALFVGNVSEMEGNTDIRLWAIVPPEPLNVRLYRCDQTFVTEPLEEMLRVKDAYGLITVEKNEATIGLLRGKRIEVLDELTSNVPGKTRAGGQSARRYERIREQETHEFMKRIGEHANRVFLPLLEKGELKGIIVGGPGPTKEDFVEGDYLHHELKKKIIGVVDISYHGEYGLRELVEKASDILRDHEVIREKKLVNEFLKHVVKDTGLATYGEREVRRALEIGAVDTLLISEGYDKVRVRAKCNHCGWEELKTMSEEEFEVYKKKLTRCPKCGSQNLTIEKWDVAEELIKMAEEAGSDVEIISLDTEEGQQFYRAFGGLGAILRFKI.

The protein belongs to the eukaryotic release factor 1 family. In terms of assembly, heterodimer of two subunits, one of which binds GTP.

The protein localises to the cytoplasm. Its function is as follows. Directs the termination of nascent peptide synthesis (translation) in response to the termination codons UAA, UAG and UGA. The protein is Peptide chain release factor subunit 1 (prf1) of Pyrococcus abyssi (strain GE5 / Orsay).